We begin with the raw amino-acid sequence, 327 residues long: Tagatose 1,6-diphosphate aldolase 2 (327 aa).

This sequence belongs to the aldolase LacD family.

It carries out the reaction D-tagatofuranose 1,6-bisphosphate = D-glyceraldehyde 3-phosphate + dihydroxyacetone phosphate. It functions in the pathway carbohydrate metabolism; D-tagatose 6-phosphate degradation; D-glyceraldehyde 3-phosphate and glycerone phosphate from D-tagatose 6-phosphate: step 2/2. This is Tagatose 1,6-diphosphate aldolase 2 (lacD2) from Streptococcus pyogenes serotype M1.